Consider the following 304-residue polypeptide: Large ribosomal subunit protein uL18 (304 aa).

The tract at residues 285-304 (LNALNSSAGADDDDEEEDDE) is disordered. Positions 294-304 (ADDDDEEEDDE) are enriched in acidic residues.

It belongs to the universal ribosomal protein uL18 family. Component of the large ribosomal subunit (LSU).

It localises to the cytoplasm. The protein resides in the nucleus. In terms of biological role, component of the ribosome, a large ribonucleoprotein complex responsible for the synthesis of proteins in the cell. The small ribosomal subunit (SSU) binds messenger RNAs (mRNAs) and translates the encoded message by selecting cognate aminoacyl-transfer RNA (tRNA) molecules. The large subunit (LSU) contains the ribosomal catalytic site termed the peptidyl transferase center (PTC), which catalyzes the formation of peptide bonds, thereby polymerizing the amino acids delivered by tRNAs into a polypeptide chain. The nascent polypeptides leave the ribosome through a tunnel in the LSU and interact with protein factors that function in enzymatic processing, targeting, and the membrane insertion of nascent chains at the exit of the ribosomal tunnel. This Oryza sativa subsp. indica (Rice) protein is Large ribosomal subunit protein uL18 (RPL5A).